Here is a 349-residue protein sequence, read N- to C-terminus: Ureidoglycolate dehydrogenase (NAD(+)) (349 aa).

The Proton acceptor role is filled by histidine 116. NAD(+) contacts are provided by residues serine 140, 174-176 (DMA), lysine 224, and 306-308 (GQD).

Belongs to the LDH2/MDH2 oxidoreductase family. As to quaternary structure, homodimer.

The protein resides in the cytoplasm. The enzyme catalyses (S)-ureidoglycolate + NAD(+) = N-carbamoyl-2-oxoglycine + NADH + H(+). The protein operates within nitrogen metabolism; (S)-allantoin degradation; oxalurate from (S)-ureidoglycolate: step 1/1. Functionally, allD plays a pivotal role as a metabolic branch-point enzyme in nitrogen utilization via the assimilation of allantoin. It is able to utilize allantoin as a sole source of nitrogen under anaerobic conditions. Catalyzes the oxidation of ureidoglycolate to oxalurate. This Escherichia coli O157:H7 protein is Ureidoglycolate dehydrogenase (NAD(+)).